Here is a 443-residue protein sequence, read N- to C-terminus: Nuclear distribution protein nudF (443 aa).

One can recognise a LisH domain in the interval 9-41; that stretch reads QAEELHKSIIAYLSSINASRSCEVLREELQVDS. Residues 60-87 are a coiled coil; the sequence is TGIARLQKKILDLESKLAGLQTELDTIS. 8 WD repeats span residues 111-152, 154-194, 198-238, 241-280, 283-343, 345-384, 388-427, and 429-443; these read SHRD…RTLK, HMRP…ANVR, GHDH…CVKV, SQGSWINDVSPSFDGKWLVTGGRDQAAMVWEVASAKSVAS, GHEN…IKTL, GHDNWVRGLLFHPGGKYLISVADDKTIRCWDLSQGGRLVK, AHGHFVSCIRWGPVPVSDVPVETSESTKSSKSDSVKPGFQ, and VIATGSADSSVRIFT.

Belongs to the WD repeat LIS1/nudF family. As to quaternary structure, self-associates. Interacts with nudE and dynein.

The protein resides in the cytoplasm. It localises to the cytoskeleton. It is found in the spindle pole. Its function is as follows. Positively regulates the activity of the minus-end directed microtubule motor protein dynein. May enhance dynein-mediated microtubule sliding by targeting dynein to the microtubule plus end. Required for nuclear migration during vegetative growth as well as development. Required for retrograde early endosome (EE) transport from the hyphal tip. Required for localization of dynein to the mitotic spindle poles. Recruits additional proteins to the dynein complex at SPBs. In Aspergillus niger (strain ATCC MYA-4892 / CBS 513.88 / FGSC A1513), this protein is Nuclear distribution protein nudF.